The sequence spans 150 residues: Multiprotein-bridging factor 1 (150 aa).

The segment at 32–59 (LNAARRSGNVVGTEKKYGSTNTKSNPEG) is disordered. A compositionally biased stretch (polar residues) spans 49–58 (GSTNTKSNPE). Residues 85–139 (IQQARQEKKLTQKDLATKINEKPNVINDYEAGRAVPNQQLLGKLERALGVKLRGK) form the HTH cro/C1-type domain. The segment at residues 96-115 (QKDLATKINEKPNVINDYEA) is a DNA-binding region (H-T-H motif).

The protein belongs to the MBF1 family.

Its function is as follows. Transcriptional coactivator that stimulates GCN4-dependent transcriptional activity by bridging the DNA-binding region of GCN4 and TBP (SPT15), thereby recruiting TBP to GCN4-bound promoters. Involved in induction of the ribosome quality control (RQC) pathway; a pathway that degrades nascent peptide chains during problematic translation. Required to prevent stalled ribosomes from frameshifting. The polypeptide is Multiprotein-bridging factor 1 (MBF1) (Debaryomyces hansenii (strain ATCC 36239 / CBS 767 / BCRC 21394 / JCM 1990 / NBRC 0083 / IGC 2968) (Yeast)).